Here is a 399-residue protein sequence, read N- to C-terminus: Dual specificity mitogen-activated protein kinase kinase 4 (399 aa).

The disordered stretch occupies residues 1–40 (MAAPSPSGGGGSGGGSGSGTPGPVGSPAPGHPAVSSMQGK). Alanine 2 carries the N-acetylalanine modification. The span at 7–22 (SGGGGSGGGSGSGTPG) shows a compositional bias: gly residues. Residues 37-52 (MQGKRKALKLNFANPP) are d domain. Arginine 58 carries the post-translational modification Asymmetric dimethylarginine; alternate. Arginine 58 is modified (omega-N-methylarginine; alternate). A Phosphoserine modification is found at serine 90. The 266-residue stretch at 102-367 (LKDLGEIGRG…YKELLKHPFI (266 aa)) folds into the Protein kinase domain. ATP-binding positions include 108-116 (IGRGAYGSV) and lysine 131. The active-site Proton acceptor is aspartate 229. Phosphoserine; by MAP3K is present on serine 257. The residue at position 261 (threonine 261) is a Phosphothreonine; by MAP3K. The interval 364–387 (HPFILMYEERAVEVACYVCKILDQ) is DVD domain.

It belongs to the protein kinase superfamily. STE Ser/Thr protein kinase family. MAP kinase kinase subfamily. As to quaternary structure, interacts with SPAG9. Interacts (via its D domain) with its substrates MAPK8/JNK1, MAPK9/JNK2, MAPK10/JNK3, MAPK11 and MAPK14. Interacts (via its DVD domain) with MAP3Ks activators like MAP3K1/MEKK1 and MAP3K11/MLK3. Interacts with ARRB1, ARRB2 and MAPK8IP3/JIP3. In terms of processing, activated by phosphorylation on Ser-257 and Thr-261 by MAP kinase kinase kinases (MAP3Ks). As to expression, abundant expression is seen in the skeletal muscle. It is also widely expressed in other tissues.

It localises to the cytoplasm. It is found in the nucleus. The enzyme catalyses L-seryl-[protein] + ATP = O-phospho-L-seryl-[protein] + ADP + H(+). It carries out the reaction L-threonyl-[protein] + ATP = O-phospho-L-threonyl-[protein] + ADP + H(+). It catalyses the reaction L-tyrosyl-[protein] + ATP = O-phospho-L-tyrosyl-[protein] + ADP + H(+). With respect to regulation, activated in response to a variety of cellular stresses, including UV and gamma-irradiation, heat shock, hyperosmolarity, T-cell receptor stimulation, peroxide and inflammatory cytokines. Also activated by developmental cues. MAP2K4/MKK4 is activated by the majority of MKKKs, such as MAP3K5/ASK1, MAP3K1/MEKK1, MAP3K7/TAK1, MAP3K10/MLK2, MAP3K11/MLK3, MAP3K12/DLK and MAP3K13/LZK. Functionally, dual specificity protein kinase which acts as an essential component of the MAP kinase signal transduction pathway. Essential component of the stress-activated protein kinase/c-Jun N-terminal kinase (SAP/JNK) signaling pathway. With MAP2K7/MKK7, is the one of the only known kinase to directly activate the stress-activated protein kinase/c-Jun N-terminal kinases MAPK8/JNK1, MAPK9/JNK2 and MAPK10/JNK3. MAP2K4/MKK4 and MAP2K7/MKK7 both activate the JNKs by phosphorylation, but they differ in their preference for the phosphorylation site in the Thr-Pro-Tyr motif. MAP2K4 shows preference for phosphorylation of the Tyr residue and MAP2K7/MKK7 for the Thr residue. The phosphorylation of the Thr residue by MAP2K7/MKK7 seems to be the prerequisite for JNK activation at least in response to pro-inflammatory cytokines, while other stimuli activate both MAP2K4/MKK4 and MAP2K7/MKK7 which synergistically phosphorylate JNKs. MAP2K4 is required for maintaining peripheral lymphoid homeostasis. The MKK/JNK signaling pathway is also involved in mitochondrial death signaling pathway, including the release cytochrome c, leading to apoptosis. Whereas MAP2K7/MKK7 exclusively activates JNKs, MAP2K4/MKK4 additionally activates the p38 MAPKs MAPK11, MAPK12, MAPK13 and MAPK14. This Homo sapiens (Human) protein is Dual specificity mitogen-activated protein kinase kinase 4 (MAP2K4).